Reading from the N-terminus, the 1007-residue chain is Serine/threonine-protein kinase atg1 (1007 aa).

Positions 30 to 336 (YTRLSEIGRG…FDVYFAHKVL (307 aa)) constitute a Protein kinase domain. ATP-binding positions include 36-44 (IGRGSFAVV) and Lys59. Residue Asp174 is the Proton acceptor of the active site. 4 disordered regions span residues 343 to 489 (LVAD…KEHA), 524 to 586 (GGQA…PTSA), 795 to 817 (RLPS…GSGT), and 878 to 900 (SRPG…DGGQ). Basic and acidic residues predominate over residues 373–387 (MKRENALSGGVRDEP). Polar residues predominate over residues 396-410 (AMTQSPRPETPSTPM). Residues 477–489 (KPVEKAKDEKEHA) are compositionally biased toward basic and acidic residues. Over residues 534–555 (SGAAPGTPPAGGSSPHASPSKA) the composition is skewed to low complexity. A compositionally biased stretch (basic and acidic residues) spans 563–579 (SRADSAHVRQNSYDRRY). The span at 805–817 (SNLSVGSSLGSGT) shows a compositional bias: low complexity. Residues 887 to 896 (DRADARRDNE) show a composition bias toward basic and acidic residues.

This sequence belongs to the protein kinase superfamily. Ser/Thr protein kinase family. APG1/unc-51/ULK1 subfamily. Homodimer. Forms a ternary complex with ATG13 and ATG17.

It is found in the cytoplasm. It localises to the preautophagosomal structure membrane. The enzyme catalyses L-seryl-[protein] + ATP = O-phospho-L-seryl-[protein] + ADP + H(+). It catalyses the reaction L-threonyl-[protein] + ATP = O-phospho-L-threonyl-[protein] + ADP + H(+). Serine/threonine protein kinase involved in the cytoplasm to vacuole transport (Cvt) and found to be essential in autophagy, where it is required for the formation of autophagosomes. Involved in the clearance of protein aggregates which cannot be efficiently cleared by the proteasome. Required for selective autophagic degradation of the nucleus (nucleophagy) as well as for mitophagy which contributes to regulate mitochondrial quantity and quality by eliminating the mitochondria to a basal level to fulfill cellular energy requirements and preventing excess ROS production. Also involved in endoplasmic reticulum-specific autophagic process, in selective removal of ER-associated degradation (ERAD) substrates. Plays a key role in ATG9 and ATG23 cycling through the pre-autophagosomal structure and is necessary to promote ATG18 binding to ATG9 through phosphorylation of ATG9. Catalyzes phosphorylation of ATG4, decreasing the interaction between ATG4 and ATG8 and impairing deconjugation of PE-conjugated forms of ATG8. This is Serine/threonine-protein kinase atg1 from Aspergillus niger (strain ATCC MYA-4892 / CBS 513.88 / FGSC A1513).